The chain runs to 608 residues: Probable Ufm1-specific protease 2 (608 aa).

Active-site residues include cysteine 441, aspartate 565, and histidine 567.

It belongs to the peptidase C78 family.

Functionally, thiol protease which recognizes and hydrolyzes the peptide bond at the C-terminal Gly of UFM1, a ubiquitin-like modifier protein bound to a number of target proteins. Does not hydrolyze SUMO1 or ISG15 ubiquitin-like proteins. This is Probable Ufm1-specific protease 2 from Drosophila pseudoobscura pseudoobscura (Fruit fly).